The following is a 151-amino-acid chain: UPF0178 protein ESA_02916 (151 aa).

Belongs to the UPF0178 family.

The chain is UPF0178 protein ESA_02916 from Cronobacter sakazakii (strain ATCC BAA-894) (Enterobacter sakazakii).